The chain runs to 302 residues: Methionyl-tRNA formyltransferase (302 aa).

108–111 (SILP) is a (6S)-5,6,7,8-tetrahydrofolate binding site.

It belongs to the Fmt family.

It catalyses the reaction L-methionyl-tRNA(fMet) + (6R)-10-formyltetrahydrofolate = N-formyl-L-methionyl-tRNA(fMet) + (6S)-5,6,7,8-tetrahydrofolate + H(+). Attaches a formyl group to the free amino group of methionyl-tRNA(fMet). The formyl group appears to play a dual role in the initiator identity of N-formylmethionyl-tRNA by promoting its recognition by IF2 and preventing the misappropriation of this tRNA by the elongation apparatus. The sequence is that of Methionyl-tRNA formyltransferase from Sulfurimonas denitrificans (strain ATCC 33889 / DSM 1251) (Thiomicrospira denitrificans (strain ATCC 33889 / DSM 1251)).